The sequence spans 86 residues: Electron transfer flavoprotein regulatory factor 1 (86 aa).

It belongs to the complex I LYR family.

The protein localises to the mitochondrion. Its function is as follows. Acts as a regulator of the electron transfer flavoprotein by promoting the removal of flavin from the ETF holoenzyme (composed of ETFA and ETFB). This chain is Electron transfer flavoprotein regulatory factor 1, found in Taeniopygia guttata (Zebra finch).